We begin with the raw amino-acid sequence, 228 residues long: Thrombin-like enzyme gyroxin analog (228 aa).

The Peptidase S1 domain maps to 1–222 (VIGGDECNIN…YLDWIQSVIA (222 aa)). Cystine bridges form between Cys7-Cys138, Cys28-Cys44, Cys78-Cys227, Cys117-Cys183, Cys149-Cys162, and Cys173-Cys198. His43 (charge relay system) is an active-site residue. Asn45 and Asn81 each carry an N-linked (GlcNAc...) asparagine glycan. The active-site Charge relay system is the Asp88. A glycan (N-linked (GlcNAc...) asparagine) is linked at Asn145. The active-site Charge relay system is the Ser177. Residue Asn224 is glycosylated (N-linked (GlcNAc...) asparagine).

The protein belongs to the peptidase S1 family. Snake venom subfamily. In terms of assembly, monomer. As to expression, expressed by the venom gland.

It is found in the secreted. It carries out the reaction Selective cleavage of Arg-|-Xaa bond in fibrinogen, to form fibrin, and release fibrinopeptide A. The specificity of further degradation of fibrinogen varies with species origin of the enzyme.. Inhibited competitively by amidines and guanidines, and irreversibly inhibited by diisopropylfluorophosphate. Functionally, thrombin-like snake venom serine protease, that cleaves alpha-chain of fibrinogen (FGA) releases only fibrinopeptide A. Shows coagulant, esterase and amidase activities. Induces the barrel rotation syndrome in mice, which is manifested by gyroxin-like, rapid rolling motions. May also reversibly increase the permeability of the blood brain barrier (BBB) in mice. This is Thrombin-like enzyme gyroxin analog from Lachesis muta muta (Bushmaster).